The primary structure comprises 352 residues: C-C chemokine receptor type 5 (352 aa).

At 1 to 30 (MDYQVSSPTYDIDYYTSGPCQKINVKQIAA) the chain is on the extracellular side. Tyr3 is subject to Sulfotyrosine. 2 O-linked (GalNAc...) serine glycosylation sites follow: Ser6 and Ser7. Tyr10, Tyr14, and Tyr15 each carry sulfotyrosine. 2 cysteine pairs are disulfide-bonded: Cys20–Cys269 and Cys101–Cys178. Residues 31 to 58 (RLLPPLYSLVFIFGFVGNMLVILILINC) traverse the membrane as a helical segment. At 59 to 68 (KRLKSMTDIY) the chain is on the cytoplasmic side. The chain crosses the membrane as a helical span at residues 69–89 (LLNLAISDLFFLLTVPFWAHY). The Extracellular segment spans residues 90 to 102 (AAAQWDFGNTMCQ). A helical membrane pass occupies residues 103 to 124 (LLTGLYFIGFFSGIFFIILLTI). The Cytoplasmic segment spans residues 125–141 (DRYLAIVHAVFALKART). Residues 142 to 166 (VTFGVVTSVITWVVAVFASLPGIIF) traverse the membrane as a helical segment. Residues 167-198 (TRSQKEGLHYTCSSHFPYSQYQFWKNFQTLKI) are Extracellular-facing. Residues 199-218 (VILGLVLPLLVMVICYSGIL) traverse the membrane as a helical segment. Residues 219-235 (KTLLRCRNEKKRHRAVR) are Cytoplasmic-facing. Residues 236–260 (LIFTIMIVYFLFWAPYNIVLLLNTF) form a helical membrane-spanning segment. Residues 261–277 (QEFFGLNNCSSSNRLDQ) are Extracellular-facing. The chain crosses the membrane as a helical span at residues 278–301 (AMQVTETLGMTHCCINPIIYAFVG). The Cytoplasmic portion of the chain corresponds to 302-352 (EKFRNYLLVFFQKHIAKHFCKCCSIFQQEAPERASSVYTRSTGEQEISVGL). 3 S-palmitoyl cysteine lipidation sites follow: Cys321, Cys323, and Cys324. 4 positions are modified to phosphoserine; by BARK1: Ser336, Ser337, Ser342, and Ser349.

It belongs to the G-protein coupled receptor 1 family. As to quaternary structure, interacts with PRAF2. Efficient ligand binding to CCL3/MIP-1alpha and CCL4/MIP-1beta requires sulfation, O-glycosylation and sialic acid modifications. Glycosylation on Ser-6 is required for efficient binding of CCL4. Interacts with GRK2. Interacts with ARRB1 and ARRB2. Interacts with CNIH4. Interacts with S100A4; this interaction stimulates T-lymphocyte chemotaxis. Sulfated on at least 2 of the N-terminal tyrosines. Sulfation is required for efficient binding of the chemokines, CCL3 and CCL4. In terms of processing, palmitoylation in the C-terminal is important for cell surface expression. Post-translationally, phosphorylation on serine residues in the C-terminal is stimulated by binding CC chemokines especially by APO-RANTES. O-glycosylated, but not N-glycosylated. Ser-6 appears to be the major site even if Ser-7 may be also O-glycosylated. Also sialylated glycans present which contribute to chemokine binding. Thr-16 and Ser-17 may also be glycosylated and, if so, with small moieties such as a T-antigen.

The protein resides in the cell membrane. In terms of biological role, receptor for a number of inflammatory CC-chemokines including CCL3/MIP-1-alpha, CCL4/MIP-1-beta and RANTES and subsequently transduces a signal by increasing the intracellular calcium ion level. May play a role in the control of granulocytic lineage proliferation or differentiation. Participates in T-lymphocyte migration to the infection site by acting as a chemotactic receptor. The polypeptide is C-C chemokine receptor type 5 (CCR5) (Hylobates moloch (Silvery gibbon)).